The primary structure comprises 189 residues: Elongation factor P (189 aa).

K34 is modified (N6-(3,6-diaminohexanoyl)-5-hydroxylysine).

It belongs to the elongation factor P family. May be beta-lysylated on the epsilon-amino group of Lys-34 by the combined action of EpmA and EpmB, and then hydroxylated on the C5 position of the same residue by EpmC (if this protein is present). Lysylation is critical for the stimulatory effect of EF-P on peptide-bond formation. The lysylation moiety may extend toward the peptidyltransferase center and stabilize the terminal 3-CCA end of the tRNA. Hydroxylation of the C5 position on Lys-34 may allow additional potential stabilizing hydrogen-bond interactions with the P-tRNA.

Its subcellular location is the cytoplasm. It participates in protein biosynthesis; polypeptide chain elongation. Its function is as follows. Involved in peptide bond synthesis. Alleviates ribosome stalling that occurs when 3 or more consecutive Pro residues or the sequence PPG is present in a protein, possibly by augmenting the peptidyl transferase activity of the ribosome. Modification of Lys-34 is required for alleviation. This Francisella tularensis subsp. novicida (strain U112) protein is Elongation factor P.